Reading from the N-terminus, the 489-residue chain is Glutamate--tRNA ligase (489 aa).

Positions 10 to 20 (PSPTGFLHIGG) match the 'HIGH' region motif. The 'KMSKS' region signature appears at 261–265 (KLSKR). Residue Lys264 coordinates ATP.

This sequence belongs to the class-I aminoacyl-tRNA synthetase family. Glutamate--tRNA ligase type 1 subfamily. Monomer.

The protein localises to the cytoplasm. It carries out the reaction tRNA(Glu) + L-glutamate + ATP = L-glutamyl-tRNA(Glu) + AMP + diphosphate. In terms of biological role, catalyzes the attachment of glutamate to tRNA(Glu) in a two-step reaction: glutamate is first activated by ATP to form Glu-AMP and then transferred to the acceptor end of tRNA(Glu). In Finegoldia magna (strain ATCC 29328 / DSM 20472 / WAL 2508) (Peptostreptococcus magnus), this protein is Glutamate--tRNA ligase.